Reading from the N-terminus, the 360-residue chain is Protein Wnt-2 (360 aa).

The first 37 residues, 1–37, serve as a signal peptide directing secretion; it reads MIPRRSCWLILLLNLLNVQSLLDASWWSTVAQLSTAL. Intrachain disulfides connect C80–C91, C130–C138, C140–C158, C213–C227, C215–C222, C289–C320, C305–C315, C319–C359, C335–C350, C337–C347, and C342–C343. A glycan (N-linked (GlcNAc...) asparagine) is linked at N90. A lipid anchor (O-palmitoleoyl serine; by mom-1) is attached at S219. An N-linked (GlcNAc...) asparagine glycan is attached at N352.

It belongs to the Wnt family. Palmitoleoylation is required for efficient binding to frizzled receptors. Depalmitoleoylation leads to Wnt signaling pathway inhibition. In terms of tissue distribution, expressed in intestine, pharynx, anterior body wall muscle, vulva, some pharyngeal neurons and SMD head neurons. Expressed along the boundary between the intestine and muscle or hypodermis, but is also expressed in the hypodermis in cells including seam cells.

The protein localises to the secreted. Its subcellular location is the extracellular space. The protein resides in the extracellular matrix. Ligand for members of the frizzled family of seven transmembrane receptors. Probable developmental protein. May be a signaling molecule which affects the development of discrete regions of tissues. Is likely to signal over only few cell diameters. Involved in the correct positioning of the developing nerve ring and in axon guidance of SIA and SIB neurons, probably by binding to tyrosine kinase receptor cam-1. In addition, regulates the positioning of some head neuronal cells, muscle arms associated with the nerve ring and the excretory pore. Together with Wnt ligand cwn-1, regulates the migration of CAN, ALM, BDU and HSN neurons during embryogenesis, the migration of QL and QR neuroblast descendants during larval development, and polarity of ALM neurons. May act through the wnt receptor cfz-2 to regulate QR neuroblast descendant migration, and to direct ALM migration. Also plays a role in axon growth and guidance in HSN and male CP neurons. In addition, together with wnt ligand cwn-1, negatively regulates developmental neurite pruning of AIM neurons probably by acting as a ligand for receptor tyrosine kinase cam-1. Through the cam-1 receptor also probably regulates the outgrowth of neurites from RME GABAergic motor neurons. May act redundantly with other Wnt ligands such as cwn-1 and mom-2 to control seam cell polarity. The protein is Protein Wnt-2 of Caenorhabditis elegans.